Consider the following 495-residue polypeptide: Putative aldehyde dehydrogenase AldA (495 aa).

212-218 (GKGSESG) is an NAD(+) binding site. Catalysis depends on residues Glu-256 and Cys-290.

The protein belongs to the aldehyde dehydrogenase family.

The catalysed reaction is an aldehyde + NAD(+) + H2O = a carboxylate + NADH + 2 H(+). The polypeptide is Putative aldehyde dehydrogenase AldA (aldA) (Staphylococcus aureus (strain bovine RF122 / ET3-1)).